The following is a 557-amino-acid chain: Hdr-like menaquinol oxidoreductase iron-sulfur subunit (557 aa).

4Fe-4S ferredoxin-type domains follow at residues 86-115 (RAFKVFMDICVRCGACADKCHYYIGTGDPK) and 155-184 (KEWYYYLLQCSLCRRCSLFCPYGIDTAEVV). [4Fe-4S] cluster is bound by residues Cys95, Cys98, Cys101, Cys105, Cys164, Cys167, Cys170, and Cys174.

[4Fe-4S] cluster is required as a cofactor.

It localises to the membrane. In terms of biological role, has menaquinol-oxidizing activity. The HmeC and HmeD subunits may together mediate electron transfer from menaquinol to an unidentified electron acceptor on the cytoplasmic side of the membrane. This is Hdr-like menaquinol oxidoreductase iron-sulfur subunit (hmeD) from Archaeoglobus profundus (strain DSM 5631 / JCM 9629 / NBRC 100127 / Av18).